The chain runs to 349 residues: N-acetyltaurine hydrolase (349 aa).

A divalent metal cation is bound by residues H26, H28, E169, H201, H230, and D298.

It belongs to the metallo-dependent hydrolases superfamily. Phosphotriesterase family. Requires a divalent metal cation as cofactor. As to expression, expressed primarily in proximal tubules of the kidney.

Its subcellular location is the cytoplasm. It localises to the cytosol. It catalyses the reaction N-acetyltaurine + H2O = taurine + acetate. The enzyme catalyses N-propanoyltaurine + H2O = propanoate + taurine. It carries out the reaction N-acetyl-L-methionine + H2O = L-methionine + acetate. The catalysed reaction is N-acetyl-L-isoleucine + H2O = L-isoleucine + acetate. It catalyses the reaction N-acetyl-L-leucine + H2O = L-leucine + acetate. The enzyme catalyses N-acetyl-L-valine + H2O = L-valine + acetate. N-acetyltaurine hydrolase that regulates feeding by catalyzing the hydrolysis of N-acetyltaurine into taurine and acetate. N-acetyltaurine has anorexigenic and anti-obesity effects that are dependent on GFRAL receptor and GDF15. PTER also acts on other N-acetyl amino acids (Met, Ile, Leu, Val) and N-propionyltaurine, but at lower rates. Binds resiniferotoxin, a vanilloid that desensitizes nociceptive neurons. The sequence is that of N-acetyltaurine hydrolase from Rattus norvegicus (Rat).